Reading from the N-terminus, the 130-residue chain is Small ribosomal subunit protein bS6 (130 aa).

The segment at 99–130 (ASPMVKAKDERRERHDFASEANDDSEAGDSEE) is disordered. A compositionally biased stretch (basic and acidic residues) spans 104-116 (KAKDERRERHDFA). Over residues 119–130 (ANDDSEAGDSEE) the composition is skewed to acidic residues.

This sequence belongs to the bacterial ribosomal protein bS6 family.

In terms of biological role, binds together with bS18 to 16S ribosomal RNA. This chain is Small ribosomal subunit protein bS6, found in Yersinia enterocolitica serotype O:8 / biotype 1B (strain NCTC 13174 / 8081).